A 344-amino-acid polypeptide reads, in one-letter code: 2-aminoethylphosphonate--pyruvate transaminase (344 aa).

At lysine 194 the chain carries N6-(pyridoxal phosphate)lysine.

The protein belongs to the class-V pyridoxal-phosphate-dependent aminotransferase family. PhnW subfamily. In terms of assembly, homodimer. The cofactor is pyridoxal 5'-phosphate.

The enzyme catalyses (2-aminoethyl)phosphonate + pyruvate = phosphonoacetaldehyde + L-alanine. Functionally, involved in phosphonate degradation. The sequence is that of 2-aminoethylphosphonate--pyruvate transaminase from Bacillus cereus.